We begin with the raw amino-acid sequence, 296 residues long: Cytidine deaminase (296 aa).

CMP/dCMP-type deaminase domains are found at residues 47 to 167 (ELNE…FGPS) and 186 to 296 (DSND…VEPE). A substrate-binding site is contributed by 88–90 (NIE). Residue His101 coordinates Zn(2+). Glu103 serves as the catalytic Proton donor. Zn(2+) is bound by residues Cys128 and Cys131.

The protein belongs to the cytidine and deoxycytidylate deaminase family. As to quaternary structure, homodimer. Requires Zn(2+) as cofactor.

The catalysed reaction is cytidine + H2O + H(+) = uridine + NH4(+). It catalyses the reaction 2'-deoxycytidine + H2O + H(+) = 2'-deoxyuridine + NH4(+). This enzyme scavenges exogenous and endogenous cytidine and 2'-deoxycytidine for UMP synthesis. This is Cytidine deaminase from Shewanella pealeana (strain ATCC 700345 / ANG-SQ1).